The following is a 1052-amino-acid chain: uncharacterized protein (1052 aa).

In terms of domain architecture, Helicase ATP-binding spans 389 to 561; that stretch reads WINKGKTFAI…NKGGNYIMIN (173 aa). 400–407 contributes to the ATP binding site; sequence SAMGTGKT.

Belongs to the mimivirus R1 family.

This is an uncharacterized protein from Acanthamoeba polyphaga mimivirus (APMV).